The primary structure comprises 227 residues: Germin-like protein 3-5 (227 aa).

The N-terminal stretch at 1 to 29 is a signal peptide; that stretch reads MEYGFKAAGLVFVVLLLQQAPVLIRATDA. Residues Cys36 and Cys51 are joined by a disulfide bond. The region spanning 65-217 is the Cupin type-1 domain; the sequence is SKIATGGDVN…ALRVDAGVVE (153 aa). N-linked (GlcNAc...) asparagine glycosylation is found at Asn78 and Asn81. His114, His116, Glu121, and His163 together coordinate Mn(2+).

This sequence belongs to the germin family. In terms of assembly, oligomer (believed to be a pentamer but probably hexamer).

The protein localises to the secreted. It is found in the extracellular space. It localises to the apoplast. Its function is as follows. May play a role in plant defense. Probably has no oxalate oxidase activity even if the active site is conserved. The chain is Germin-like protein 3-5 from Oryza sativa subsp. japonica (Rice).